A 143-amino-acid chain; its full sequence is Putative pre-16S rRNA nuclease (143 aa).

This sequence belongs to the YqgF nuclease family.

The protein localises to the cytoplasm. In terms of biological role, could be a nuclease involved in processing of the 5'-end of pre-16S rRNA. The protein is Putative pre-16S rRNA nuclease of Agathobacter rectalis (strain ATCC 33656 / DSM 3377 / JCM 17463 / KCTC 5835 / VPI 0990) (Eubacterium rectale).